The following is a 116-amino-acid chain: Large ribosomal subunit protein bL19 (116 aa).

Belongs to the bacterial ribosomal protein bL19 family.

This protein is located at the 30S-50S ribosomal subunit interface and may play a role in the structure and function of the aminoacyl-tRNA binding site. The polypeptide is Large ribosomal subunit protein bL19 (Haemophilus influenzae (strain 86-028NP)).